A 256-amino-acid polypeptide reads, in one-letter code: MVAPSGAMSDSENSSSSSSDAEELARCREAATPAWGLEQRPGAAERPEAGAADKQAPTPQPSRRHEVNQHEEDGNDLRTTPEFRAHVAKKLGALLDSSIAIAEVWKKSQKAKMQQVAKEEDGFRLFFTSIPGGHKKEASPRPCRKRQPPSSSEDSDEELQRCREAAVSASDILQESAIHCPAKAEEKKKLKKKAKKKVDNADLAAAPGLEQVKEAGVVNGDPVSLGIQKKRKKKAKKSREAPLCPPAECAAAKPEN.

Positions 1–19 are enriched in low complexity; that stretch reads MVAPSGAMSDSENSSSSSS. Disordered regions lie at residues 1 to 83, 127 to 163, and 227 to 256; these read MVAP…TPEF, FTSIPGGHKKEASPRPCRKRQPPSSSEDSDEELQRCR, and IQKKRKKKAKKSREAPLCPPAECAAAKPEN. The residue at position 62 (S62) is a Phosphoserine. Basic and acidic residues predominate over residues 63-83; the sequence is RRHEVNQHEEDGNDLRTTPEF. T80 carries the phosphothreonine modification. S139 carries the post-translational modification Phosphoserine. Residues 228-235 carry the Nucleolar localization signal (NLS) motif; that stretch reads QKKRKKKA. A compositionally biased stretch (basic residues) spans 228–237; sequence QKKRKKKAKK. The span at 246 to 256 shows a compositional bias: low complexity; sequence PAECAAAKPEN.

This sequence belongs to the CUSTOS family.

The protein resides in the nucleus envelope. Its function is as follows. Plays a role in the regulation of Wnt signaling pathway during early development. This is Protein CUSTOS from Mus musculus (Mouse).